Consider the following 428-residue polypeptide: D-serine dehydratase (428 aa).

N6-(pyridoxal phosphate)lysine is present on Lys57. Tyr203, Tyr210, Thr255, Gly286, and Asn287 together coordinate pyridoxal 5'-phosphate. 2 residues coordinate Zn(2+): His398 and Cys400.

Belongs to the DSD1 family. Homodimer. Requires pyridoxal 5'-phosphate as cofactor. Zn(2+) is required as a cofactor.

It carries out the reaction D-serine = pyruvate + NH4(+). With respect to regulation, sodium cyanoborohydride, N-ethylmaleimide, hydroxylamine, phenyhydrazin and EDTA are inhibitors of the catalytic activity. Its function is as follows. Catalyzes the conversion of D-serine to pyruvate and ammonia. May play a role in D-serine detoxification. The sequence is that of D-serine dehydratase from Saccharomyces cerevisiae (strain ATCC 204508 / S288c) (Baker's yeast).